The chain runs to 299 residues: GTPase Era (299 aa).

An Era-type G domain is found at 5 to 172 (KSGFVSIIGR…IDVLKSFLPE (168 aa)). Residues 13 to 20 (GRPNVGKS) are G1. Residue 13 to 20 (GRPNVGKS) coordinates GTP. Residues 39–43 (QTTRN) are G2. The G3 stretch occupies residues 60–63 (DTPG). GTP-binding positions include 60 to 64 (DTPGI) and 122 to 125 (NKID). The interval 122–125 (NKID) is G4. Positions 151 to 153 (ISA) are G5. Positions 203–280 (TSEEIPHAIG…YLELWVKVQR (78 aa)) constitute a KH type-2 domain.

This sequence belongs to the TRAFAC class TrmE-Era-EngA-EngB-Septin-like GTPase superfamily. Era GTPase family. In terms of assembly, monomer.

It localises to the cytoplasm. Its subcellular location is the cell membrane. Its function is as follows. An essential GTPase that binds both GDP and GTP, with rapid nucleotide exchange. Plays a role in 16S rRNA processing and 30S ribosomal subunit biogenesis and possibly also in cell cycle regulation and energy metabolism. This chain is GTPase Era, found in Staphylococcus epidermidis (strain ATCC 35984 / DSM 28319 / BCRC 17069 / CCUG 31568 / BM 3577 / RP62A).